The following is a 292-amino-acid chain: ATP phosphoribosyltransferase (292 aa).

Belongs to the ATP phosphoribosyltransferase family. Long subfamily. It depends on Mg(2+) as a cofactor.

The protein resides in the cytoplasm. It catalyses the reaction 1-(5-phospho-beta-D-ribosyl)-ATP + diphosphate = 5-phospho-alpha-D-ribose 1-diphosphate + ATP. It functions in the pathway amino-acid biosynthesis; L-histidine biosynthesis; L-histidine from 5-phospho-alpha-D-ribose 1-diphosphate: step 1/9. With respect to regulation, feedback inhibited by histidine. Functionally, catalyzes the condensation of ATP and 5-phosphoribose 1-diphosphate to form N'-(5'-phosphoribosyl)-ATP (PR-ATP). Has a crucial role in the pathway because the rate of histidine biosynthesis seems to be controlled primarily by regulation of HisG enzymatic activity. The chain is ATP phosphoribosyltransferase from Gemmatimonas aurantiaca (strain DSM 14586 / JCM 11422 / NBRC 100505 / T-27).